A 228-amino-acid chain; its full sequence is Dolichyl-phosphate hexose transferase HVO_1613 (228 aa).

The protein belongs to the glycosyltransferase 2 family.

Glycosyltransferase that adds a monosaccharide to dolichol phosphate, thereby being responsible for generating one of the three monosaccharide-modified dolichol phosphates. The subunit onto which additional sugars are added is not known. The protein is Dolichyl-phosphate hexose transferase HVO_1613 of Haloferax volcanii (strain ATCC 29605 / DSM 3757 / JCM 8879 / NBRC 14742 / NCIMB 2012 / VKM B-1768 / DS2) (Halobacterium volcanii).